The sequence spans 151 residues: UPF0756 membrane protein GTNG_2661 (151 aa).

The next 4 helical transmembrane spans lie at 5–25 (VLFLLLLLAIGVIAKNQSLII), 53–73 (WGVTVITVAVLAPIATGEIGF), 86–106 (WIALLFGIFVALIAKGGVMLL), and 116–136 (LVLGTVIAVSLFHGVAVGPLI).

Belongs to the UPF0756 family.

It localises to the cell membrane. In Geobacillus thermodenitrificans (strain NG80-2), this protein is UPF0756 membrane protein GTNG_2661.